We begin with the raw amino-acid sequence, 457 residues long: Bifunctional protein GlmU (457 aa).

The tract at residues Met-1–Arg-230 is pyrophosphorylase. UDP-N-acetyl-alpha-D-glucosamine-binding positions include Leu-9–Gly-12, Lys-23, Gln-73, and Gly-78–Thr-79. Asp-103 contributes to the Mg(2+) binding site. UDP-N-acetyl-alpha-D-glucosamine contacts are provided by Gly-140, Glu-155, Asn-170, and Asn-228. Asn-228 serves as a coordination point for Mg(2+). Positions Ile-231 to Asn-251 are linker. The tract at residues Gly-252 to Lys-457 is N-acetyltransferase. 2 residues coordinate UDP-N-acetyl-alpha-D-glucosamine: Arg-333 and Lys-351. The active-site Proton acceptor is His-363. The UDP-N-acetyl-alpha-D-glucosamine site is built by Tyr-366 and Asn-377. Acetyl-CoA-binding positions include Asn-386 to Tyr-387, Ala-423, and Arg-440.

It in the N-terminal section; belongs to the N-acetylglucosamine-1-phosphate uridyltransferase family. This sequence in the C-terminal section; belongs to the transferase hexapeptide repeat family. As to quaternary structure, homotrimer. Mg(2+) is required as a cofactor.

It is found in the cytoplasm. The catalysed reaction is alpha-D-glucosamine 1-phosphate + acetyl-CoA = N-acetyl-alpha-D-glucosamine 1-phosphate + CoA + H(+). It catalyses the reaction N-acetyl-alpha-D-glucosamine 1-phosphate + UTP + H(+) = UDP-N-acetyl-alpha-D-glucosamine + diphosphate. Its pathway is nucleotide-sugar biosynthesis; UDP-N-acetyl-alpha-D-glucosamine biosynthesis; N-acetyl-alpha-D-glucosamine 1-phosphate from alpha-D-glucosamine 6-phosphate (route II): step 2/2. It participates in nucleotide-sugar biosynthesis; UDP-N-acetyl-alpha-D-glucosamine biosynthesis; UDP-N-acetyl-alpha-D-glucosamine from N-acetyl-alpha-D-glucosamine 1-phosphate: step 1/1. It functions in the pathway bacterial outer membrane biogenesis; LPS lipid A biosynthesis. Functionally, catalyzes the last two sequential reactions in the de novo biosynthetic pathway for UDP-N-acetylglucosamine (UDP-GlcNAc). The C-terminal domain catalyzes the transfer of acetyl group from acetyl coenzyme A to glucosamine-1-phosphate (GlcN-1-P) to produce N-acetylglucosamine-1-phosphate (GlcNAc-1-P), which is converted into UDP-GlcNAc by the transfer of uridine 5-monophosphate (from uridine 5-triphosphate), a reaction catalyzed by the N-terminal domain. The polypeptide is Bifunctional protein GlmU (Listeria monocytogenes serotype 4b (strain F2365)).